The primary structure comprises 537 residues: 2-isopropylmalate synthase (537 aa).

The region spanning 8–273 is the Pyruvate carboxyltransferase domain; it reads IIIFDTTLRD…FLGRPVDSME (266 aa). Mn(2+) is bound by residues Asp-17, His-208, His-210, and Asn-244. The regulatory domain stretch occupies residues 408–537; that stretch reads RLELVQVSCG…PSEPVLTSKN (130 aa).

It belongs to the alpha-IPM synthase/homocitrate synthase family. LeuA type 1 subfamily. Homodimer. It depends on Mn(2+) as a cofactor.

It localises to the cytoplasm. The enzyme catalyses 3-methyl-2-oxobutanoate + acetyl-CoA + H2O = (2S)-2-isopropylmalate + CoA + H(+). Its pathway is amino-acid biosynthesis; L-leucine biosynthesis; L-leucine from 3-methyl-2-oxobutanoate: step 1/4. Functionally, catalyzes the condensation of the acetyl group of acetyl-CoA with 3-methyl-2-oxobutanoate (2-ketoisovalerate) to form 3-carboxy-3-hydroxy-4-methylpentanoate (2-isopropylmalate). In Crocosphaera subtropica (strain ATCC 51142 / BH68) (Cyanothece sp. (strain ATCC 51142)), this protein is 2-isopropylmalate synthase.